A 346-amino-acid chain; its full sequence is Sensor protein kinase GraS (346 aa).

2 helical membrane-spanning segments follow: residues 18–38 (IFWILFLNILMLGISLIDYDF) and 43–63 (LFYIVSLNLSLTLIFLILTFF). The region spanning 126–332 (EFVHDIKTPV…TVKLIFPLQN (207 aa)) is the Histidine kinase domain.

Interacts with GraX.

It localises to the cell membrane. The enzyme catalyses ATP + protein L-histidine = ADP + protein N-phospho-L-histidine.. In terms of biological role, member of the two-component regulatory system GraR/GraS involved in resistance against cationic antimicrobial peptides (CAMPs). Functions as a sensor protein kinase which phosphorylates GraR through the auxiliary protein GraX. In turn, GraR up-regulates many genes such as adhesins, exoproteins, transporters, toxins, and proteins involved in cell wall synthesis. Down-regulates the expression of many genes involved in RNA and amino acid synthesis or glycolysis. This Staphylococcus aureus (strain MRSA252) protein is Sensor protein kinase GraS (graS).